An 89-amino-acid polypeptide reads, in one-letter code: Acylphosphatase (89 aa).

The Acylphosphatase-like domain occupies 4-89; sequence CVRCLIAGRV…IPEIQMFEVR (86 aa). Catalysis depends on residues R19 and N37.

It belongs to the acylphosphatase family.

It carries out the reaction an acyl phosphate + H2O = a carboxylate + phosphate + H(+). In Nitrosococcus oceani (strain ATCC 19707 / BCRC 17464 / JCM 30415 / NCIMB 11848 / C-107), this protein is Acylphosphatase (acyP).